The sequence spans 88 residues: ATP synthase epsilon chain (88 aa).

It belongs to the ATPase epsilon chain family. As to quaternary structure, F-type ATPases have 2 components, CF(1) - the catalytic core - and CF(0) - the membrane proton channel. CF(1) has five subunits: alpha(3), beta(3), gamma(1), delta(1), epsilon(1). CF(0) has three main subunits: a, b and c.

It localises to the cell inner membrane. Its function is as follows. Produces ATP from ADP in the presence of a proton gradient across the membrane. The protein is ATP synthase epsilon chain (atpC) of Chlorobaculum tepidum (strain ATCC 49652 / DSM 12025 / NBRC 103806 / TLS) (Chlorobium tepidum).